The chain runs to 1115 residues: Eukaryotic translation initiation factor 2-alpha kinase 3 (1115 aa).

A signal peptide spans 1 to 29; that stretch reads MERATGPGSLARTLLLPLLLGLVAGTVTA. Residues 30 to 514 lie on the Extracellular side of the membrane; it reads RRTSDLLAPT…PNYKNIRKKD (485 aa). The segment at 74 to 101 is disordered; it reads SEALPAAAGEQEAREPEPEPEEEPDIRP. Residue Asn-259 is glycosylated (N-linked (GlcNAc...) asparagine). Residues 515-535 form a helical membrane-spanning segment; sequence PVLLLHWWKEIVGTIVFCIVA. Topologically, residues 536 to 1115 are cytoplasmic; sequence TTFIVRRLFH…SSPHSPLPSN (580 aa). One can recognise a Protein kinase domain in the interval 593 to 1076; it reads FEPIQCMGRG…AASIIENAIF (484 aa). 599-607 contacts ATP; that stretch reads MGRGGFGVV. Tyr-619 is subject to Phosphotyrosine; by autocatalysis. ATP is bound at residue Lys-622. An insert loop region spans residues 647–887; the sequence is EHPGIVRYFN…SPKVYLYIQM (241 aa). Ser-715 carries the post-translational modification Phosphoserine. Thr-802 carries the phosphothreonine modification. 2 disordered regions span residues 807 to 832 and 841 to 860; these read VFED…VGNH and RHSG…SRPT. Over residues 845–860 the composition is skewed to polar residues; that stretch reads SKSSEPTVSVSPSRPT. Asp-936 (proton acceptor) is an active-site residue. Thr-981 carries the phosphothreonine modification. Residues 1087–1115 form a disordered region; sequence LRQRSRSMSSPGAKHSRHSSSPHSPLPSN. Ser-1093 is subject to Phosphoserine.

The protein belongs to the protein kinase superfamily. Ser/Thr protein kinase family. GCN2 subfamily. As to quaternary structure, forms dimers with HSPA5/BIP in resting cells. Homotetramerizes in response to endoplasmic reticulum (ER) stress, leading to its activation. Interacts with HSP90B1/GRP94. Interacts with DNAJC3; inhibiting EIF2AK3/PERK activity. Interacts with ATAD3A; ATAD3A and EIF2S1/eIF-2-alpha occupy a common binding site within the cytoplasmic loop of EIF2AK3/PERK, leading to prevent EIF2AK3/PERK association with its substrate EIF2S1/eIF-2-alpha. Interacts with MFN2. Interacts with TMEM33. Interacts with PDIA6. Interacts with LACC1. Post-translationally, oligomerization of the N-terminal ER luminal domain by ER stress promotes EIF2AK3/PERK trans-autophosphorylation of the C-terminal cytoplasmic kinase domain at multiple residues including Thr-981 on the kinase activation loop. Autophosphorylated at Tyr-619 following endoplasmic reticulum stress, leading to activate its activity. Dephosphorylated at Tyr-619 by PTPN1/PTP1B, leading to inactivate its enzyme activity. Phosphorylation at Thr-802 by AKT (AKT1, AKT2 and/or AKT3) inactivates EIF2AK3/PERK. In terms of processing, ADP-ribosylated by PARP16 upon ER stress, which increases kinase activity.

It is found in the endoplasmic reticulum membrane. It catalyses the reaction L-seryl-[protein] + ATP = O-phospho-L-seryl-[protein] + ADP + H(+). The catalysed reaction is L-threonyl-[protein] + ATP = O-phospho-L-threonyl-[protein] + ADP + H(+). The enzyme catalyses L-tyrosyl-[protein] + ATP = O-phospho-L-tyrosyl-[protein] + ADP + H(+). With respect to regulation, inhibited by HSPA5/BIP in absence of stress. Perturbation in protein folding in the endoplasmic reticulum (ER) promotes reversible dissociation from HSPA5/BIP and oligomerization, resulting in trans-autophosphorylation and kinase activity induction. Inactivated following phosphorylation at Thr-802 by AKT (AKT1, AKT2 and/or AKT3). Inhibited by ATAD3A at mitochondria-endoplasmic reticulum contact sites, providing a safe haven for mitochondrial protein translation during ER stress. Its function is as follows. Metabolic-stress sensing protein kinase that phosphorylates the alpha subunit of eukaryotic translation initiation factor 2 (EIF2S1/eIF-2-alpha) in response to various stress, such as unfolded protein response (UPR). Key effector of the integrated stress response (ISR) to unfolded proteins: EIF2AK3/PERK specifically recognizes and binds misfolded proteins, leading to its activation and EIF2S1/eIF-2-alpha phosphorylation. EIF2S1/eIF-2-alpha phosphorylation in response to stress converts EIF2S1/eIF-2-alpha in a global protein synthesis inhibitor, leading to a global attenuation of cap-dependent translation, while concomitantly initiating the preferential translation of ISR-specific mRNAs, such as the transcriptional activators ATF4 and QRICH1, and hence allowing ATF4- and QRICH1-mediated reprogramming. The EIF2AK3/PERK-mediated unfolded protein response increases mitochondrial oxidative phosphorylation by promoting ATF4-mediated expression of COX7A2L/SCAF1, thereby increasing formation of respiratory chain supercomplexes. In contrast to most subcellular compartments, mitochondria are protected from the EIF2AK3/PERK-mediated unfolded protein response due to EIF2AK3/PERK inhibition by ATAD3A at mitochondria-endoplasmic reticulum contact sites. In addition to EIF2S1/eIF-2-alpha, also phosphorylates NFE2L2/NRF2 in response to stress, promoting release of NFE2L2/NRF2 from the BCR(KEAP1) complex, leading to nuclear accumulation and activation of NFE2L2/NRF2. Serves as a critical effector of unfolded protein response (UPR)-induced G1 growth arrest due to the loss of cyclin-D1 (CCND1). Involved in control of mitochondrial morphology and function. The polypeptide is Eukaryotic translation initiation factor 2-alpha kinase 3 (Bos taurus (Bovine)).